We begin with the raw amino-acid sequence, 439 residues long: MSTQIPARQETYDPSQSSGTKTPSHPYDGNPTRSYPKRNAGKFTTYSSQMIAPRKRKAWEYEEEEYEASRDFYQRVTSWYDGAVDLAPQLFREQHFPSYDEFYSLGGVNEKFLEAHEEVKAQEQMDSRYLQHGQLPSINMGKQPIIGVIYGPTGSGKSHLLRALISCNMLDPIPETVIFITPEKNMIPPIEQTSWNLQLVEANFDCREDGTIAPKTSTFRPEFMEMTYEEATAPEHLNIDHPDNIYVKVSKRGPVAIIMDECMDKLCSGSSVSVLFHALPSKLFARSAHCTAFYIFVVLHNMAPRTAIGNVPTLKVNAKMHILSCHIPQFQFARFLYAFAHNISKDLVVLLKAYFSFLQQNQRFSWVMYTPDPVSESFRWCSIDQQYSIIPLNVNIQERFLKTAKSIIKFSETHRKQLERNPKLTDLEKLSPPGTFQET.

The segment covering 1-23 has biased composition (polar residues); that stretch reads MSTQIPARQETYDPSQSSGTKTP. The disordered stretch occupies residues 1-42; that stretch reads MSTQIPARQETYDPSQSSGTKTPSHPYDGNPTRSYPKRNAGK. 151 to 158 provides a ligand contact to ATP; the sequence is GPTGSGKS. The tract at residues 419–439 is DNA-binding; it reads ERNPKLTDLEKLSPPGTFQET.

It belongs to the adenoviridae packaging protein 1 family. As to quaternary structure, homodimer. Part of a genome packaging complex composed of packaging proteins 1, 2 and 3; this complex specifically binds to the packaging sequence on the left end of viral genomic DNA and performs packaging of the viral genome. Interacts with protein 33K.

The protein resides in the virion. It is found in the host nucleus. It localises to the host nucleoplasm. The protein localises to the host nucleolus. Component of the packaging machinery which encapsidates the viral DNA into preformed capsids and transcriptional activator of the viral major late promoter (MLP). Binds, along with packaging proteins 2 and 3, to the specific packaging sequence on the left end of viral genomic DNA and displays ATPase activity thereby providing the power stroke of the packaging machinery. The activity of packaging protein IVa2 is stimulated by protein 33K which acts as a terminase. May be the protein that pumps DNA into the capsid powered by ATP hydrolysis. Specifically binds to the 5'-CG-3' nucleotides of the repeats making up the packaging sequence. Component of the DEF-A and DEF-B transcription factors that bind downstream elements of the major late promoter (MLP), and stimulate transcription from the MLP after initiation of viral DNA replication. DEF-A is a heterodimer packaging proteins 1 and 2 and DEF-B is a homodimer of packaging protein 1. This Fowl adenovirus A serotype 1 (strain CELO / Phelps) (FAdV-1) protein is Packaging protein 1.